The sequence spans 745 residues: uncharacterized protein (745 aa).

One can recognise an HTH araC/xylS-type domain in the interval 158 to 256; that stretch reads NQVCDYIELH…HQTPKQYRGD (99 aa). DNA-binding regions (H-T-H motif) lie at residues 175–196 and 223–246; these read SELS…TESL and ITDI…KHFT.

This is an uncharacterized protein from Staphylococcus aureus (strain MW2).